The primary structure comprises 140 residues: Ribonuclease P protein subunit p20 (140 aa).

The protein belongs to the histone-like Alba family. As to quaternary structure, component of nuclear RNase P and RNase MRP complexes. RNase P consists of a catalytic RNA moiety and 10 different protein chains; POP1, POP4, POP5, POP7, RPP14, RPP21, RPP25, RPP30, RPP38 and RPP40. Within the RNase P complex, POP1, POP7 and RPP25 form the 'finger' subcomplex, POP5, RPP14, RPP40 and homodimeric RPP30 form the 'palm' subcomplex, and RPP21, POP4 and RPP38 form the 'wrist' subcomplex. All subunits of the RNase P complex interact with the catalytic RNA. Several subunits of RNase P are also part of the RNase MRP complex. RNase MRP consists of a catalytic RNA moiety and about 8 protein subunits; POP1, POP7, RPP25, RPP30, RPP38, RPP40 and possibly also POP4 and POP5. Interacts with SMN1. POP7 forms a heterodimer with RPP25 that binds to the P3 stem loop of the catalytic RNA.

Its subcellular location is the nucleus. The protein localises to the nucleolus. It is found in the cytoplasm. The protein resides in the cytoplasmic granule. Functionally, component of ribonuclease P, a ribonucleoprotein complex that generates mature tRNA molecules by cleaving their 5'-ends. Also a component of the MRP ribonuclease complex, which cleaves pre-rRNA sequences. This Homo sapiens (Human) protein is Ribonuclease P protein subunit p20 (POP7).